The primary structure comprises 369 residues: Actin-related protein T3 (369 aa).

This sequence belongs to the actin family. Interacts with PFN3. As to expression, testis specific (at protein level). Expressed specifically in haploid germ cells.

The protein resides in the cytoplasm. The protein localises to the cytoskeleton. It localises to the nucleus. The polypeptide is Actin-related protein T3 (Actrt3) (Mus musculus (Mouse)).